A 355-amino-acid polypeptide reads, in one-letter code: 3-dehydroquinate synthase (355 aa).

Residues 71–76 (EGEASK), 105–109 (GVVGD), 129–130 (TS), Lys142, Lys151, and 169–172 (TLKT) each bind NAD(+). Glu184, His246, and His263 together coordinate Zn(2+).

Belongs to the sugar phosphate cyclases superfamily. Dehydroquinate synthase family. The cofactor is Co(2+). Zn(2+) serves as cofactor. It depends on NAD(+) as a cofactor.

The protein resides in the cytoplasm. It carries out the reaction 7-phospho-2-dehydro-3-deoxy-D-arabino-heptonate = 3-dehydroquinate + phosphate. It participates in metabolic intermediate biosynthesis; chorismate biosynthesis; chorismate from D-erythrose 4-phosphate and phosphoenolpyruvate: step 2/7. Catalyzes the conversion of 3-deoxy-D-arabino-heptulosonate 7-phosphate (DAHP) to dehydroquinate (DHQ). The sequence is that of 3-dehydroquinate synthase from Streptococcus suis (strain 98HAH33).